We begin with the raw amino-acid sequence, 613 residues long: ADP-ribosylation factor-binding protein GGA2 (613 aa).

The region spanning 33–163 (ATDPSMSEQD…MLKKQGIIKQ (131 aa)) is the VHS domain. The GAT domain occupies 188–315 (DEEKSKLLTR…GVLLYKQVME (128 aa)). The unstructured hinge stretch occupies residues 316 to 483 (GRVTFGNRVT…VFVPLESVKP (168 aa)). Disordered stretches follow at residues 389 to 414 (GQNC…NPSA) and 435 to 466 (SQKS…SPSS). The segment covering 399 to 414 (PSSSTLPGGGVQNPSA) has biased composition (polar residues). Position 400 is a phosphoserine (serine 400). Positions 484-605 (SSLPPLIVYD…SEVGEVKDFP (122 aa)) constitute a GAE domain.

This sequence belongs to the GGA protein family. As to quaternary structure, monomer. Interacts with NECAP1, TSG101, UBC and AFTPH/aftiphilin. Interacts with CNST. Interacts with GGA1 and GGA3. Binds to clathrin and activated ARFs, such as ARF1, ARF5 and ARF6. Binds RABEP1 and RABGEF1. Interacts with the type-I membrane proteins LRP3, M6PR/CD-MPR, IGF2R/CI-MPR and BACE1. Interacts (via N-terminal VHS domain) with SORL1/sorLA and SORT1 (via C-terminal cytosolic domain). Binds the accessory proteins CCDC91, P200, SYNRG, EPN4 and NECAP2. Interacts with ADRA2B. Interacts (via VHS domain) with PIK4B; the interaction is important for PIK4B location at the Golgi apparatus membrane. Ubiquitinated. Ubiquitously expressed.

The protein localises to the golgi apparatus. Its subcellular location is the trans-Golgi network membrane. It is found in the endosome membrane. It localises to the early endosome membrane. Plays a role in protein sorting and trafficking between the trans-Golgi network (TGN) and endosomes. Mediates the ARF-dependent recruitment of clathrin to the TGN and binds ubiquitinated proteins and membrane cargo molecules with a cytosolic acidic cluster-dileucine (DXXLL) motif. Mediates export of the GPCR receptor ADRA2B to the cell surface. Regulates retrograde transport of phosphorylated form of BACE1 from endosomes to the trans-Golgi network. The polypeptide is ADP-ribosylation factor-binding protein GGA2 (GGA2) (Homo sapiens (Human)).